Consider the following 426-residue polypeptide: MSKQIQAIRGMNDCLPEQSGLWQWAEKAIREVVASYGYQEVRTPIVESTDLFKRSIGEVTDIVEKEMYTFADRNDDSLTLRPEGTASVVRAGNEHGLLYNQQQRLWYLGPMFRHERPQKGRYRQFHQFGVEVFGLAGPDIDAEVIALSARLWKKFGISEQVTLELNSLGSNEARETYRKALVEFLLARKEHLDEDSLRRLESNPLRVLDSKNPQVQAAITDAPSLIDYLDAESKEHFHALCERLDALGIQYRVNPRLVRGLDYYNRTVFEWVTDSLGAQGTVCAGGRYDGLVEQLGGKSTQGVGFAIGMERLVLMLQASGAEEFVASPVDVYVTAMGDEVELYALQIAESLRDVMPTLRVQTHFGGGNFKKQMKRADKSAARVALVLGETEQQEEQVSIKFLREDKPQSRIARSELESTLVELFSL.

Belongs to the class-II aminoacyl-tRNA synthetase family. Homodimer.

It is found in the cytoplasm. The catalysed reaction is tRNA(His) + L-histidine + ATP = L-histidyl-tRNA(His) + AMP + diphosphate + H(+). In Pseudoalteromonas atlantica (strain T6c / ATCC BAA-1087), this protein is Histidine--tRNA ligase.